Reading from the N-terminus, the 543-residue chain is CTP synthase (543 aa).

Residues 1–265 (MTRFVFITGG…DQEVLRYFDL (265 aa)) are amidoligase domain. Position 13 (Ser13) interacts with CTP. Position 13 (Ser13) interacts with UTP. 14–19 (SLGKGI) provides a ligand contact to ATP. Tyr54 contacts L-glutamine. Asp71 is a binding site for ATP. Mg(2+)-binding residues include Asp71 and Glu139. Residues 146-148 (DIE), 186-191 (KTKPTQ), and Lys222 contribute to the CTP site. UTP-binding positions include 186–191 (KTKPTQ) and Lys222. Residues 291-542 (RVAIVGKYTA…IAAAVKEAHR (252 aa)) form the Glutamine amidotransferase type-1 domain. Gly354 is a binding site for L-glutamine. Cys381 (nucleophile; for glutamine hydrolysis) is an active-site residue. L-glutamine-binding positions include 382–385 (FGMQ), Glu405, and Arg470. Active-site residues include His515 and Glu517.

It belongs to the CTP synthase family. As to quaternary structure, homotetramer.

It catalyses the reaction UTP + L-glutamine + ATP + H2O = CTP + L-glutamate + ADP + phosphate + 2 H(+). The catalysed reaction is L-glutamine + H2O = L-glutamate + NH4(+). It carries out the reaction UTP + NH4(+) + ATP = CTP + ADP + phosphate + 2 H(+). Its pathway is pyrimidine metabolism; CTP biosynthesis via de novo pathway; CTP from UDP: step 2/2. Its activity is regulated as follows. Allosterically activated by GTP, when glutamine is the substrate; GTP has no effect on the reaction when ammonia is the substrate. The allosteric effector GTP functions by stabilizing the protein conformation that binds the tetrahedral intermediate(s) formed during glutamine hydrolysis. Inhibited by the product CTP, via allosteric rather than competitive inhibition. Functionally, catalyzes the ATP-dependent amination of UTP to CTP with either L-glutamine or ammonia as the source of nitrogen. Regulates intracellular CTP levels through interactions with the four ribonucleotide triphosphates. The chain is CTP synthase from Gluconobacter oxydans (strain 621H) (Gluconobacter suboxydans).